The primary structure comprises 336 residues: E3 ubiquitin-protein ligase RING2 (336 aa).

Serine 2 bears the N-acetylserine mark. The interaction with HIP2 stretch occupies residues 2–179; that stretch reads SQAVQTNGTQ…AEDNGDSSHC (178 aa). At serine 41 the chain carries Phosphoserine. Residues 51 to 91 form an RING-type zinc finger; that stretch reads CPICLDMLKNTMTTKECLHRFCADCIITALRSGNKECPTCR. An interaction with nucleosomes via an acidic patch on histone H2A and histone H2B region spans residues 93-98; the sequence is KLVSKR. A Glycyl lysine isopeptide (Lys-Gly) (interchain with G-Cter in ubiquitin) cross-link involves residue lysine 112. Phosphoserine is present on residues serine 143 and serine 168. The interval 157-213 is disordered; the sequence is QRGKKQQIENGSGAEDNGDSSHCSNASTHSNQEAGPSNKRTKTSDDSGLEPDNNNAA. Positions 176–191 are enriched in polar residues; it reads SSHCSNASTHSNQEAG. Residues lysine 249 and lysine 323 each participate in a glycyl lysine isopeptide (Lys-Gly) (interchain with G-Cter in SUMO2) cross-link.

In terms of assembly, component of chromatin-associated Polycomb (PcG) complexes. Component of a number of PRC1-like complexes; these complexes contain either the polycomb group ring finger protein PCGF1, or PCGF2, or PCGF3, or BMI1, or PCGF5, or PCGF6. Distinct PRC1-like complexes are composed of a RING1 subunit (RING1B or RING1A), one of the six PCGF proteins (PCGF1, PCGF2, PCGF3, BMI1, PCGF5 or PCGF6), one PHC protein (PHC1, PHC2 or PHC3) and one of the CBX proteins (CBX2, CBX4, CBX6, CBX7 or CBX8). Part of a complex that contains RNF2, UB2D3 and BMI1; within that complex RNF2 and BMI1 form a tight heterodimer, where UB2D3 interacts only with RNF2. The complex composed of RNF2, UB2D3 and BMI1 binds nucleosomes, and has activity only with nucleosomal histone H2A. Part of a complex that contains PCGF5, RNF2 and UBE2D3. Part of a complex that contains AUTS2, PCGF5, RNF2, CSNK2B and RYBP. Interacts with CBX6 and CBX8. Interacts with PHC1, PCGF2, RYBP, CBX7, CBX4, CBX2, RNF1/RING1, BMI1 and PHC2. Interaction with RYBP and CBX7 is mutually exclusive; both compete for the same binding site on RNF2. Component of repressive BCOR complex containing a Polycomb group subcomplex at least composed of RYBP, PCGF1, BCOR and RING1. Interacts with CBX2 and PHC1. Interacts with CHTOP. Interacts with AURKB. Part of the E2F6.com-1 complex in G0 phase composed of E2F6, MGA, MAX, TFDP1, CBX3, BAT8, EUHMTASE1, RNF1/RING1, RNF2/RING2, MBLR, L3MBTL2 and YAF2. Component of some MLL1/MLL complex, at least composed of the core components KMT2A/MLL1, ASH2L, HCFC1/HCF1, WDR5 and RBBP5, as well as the facultative components BACC1, CHD8, E2F6, HSP70, INO80C, KANSL1, LAS1L, MAX, MCRS1, MGA, MYST1/MOF, PELP1, PHF20, PRP31, RING2, RUVB1/TIP49A, RUVB2/TIP49B, SENP3, TAF1, TAF4, TAF6, TAF7, TAF9 and TEX10. Interacts with RYBP, HIP2 and TFCP2. Interacts with NUPR1. Interacts with SAMD7 in a PHC2-dependent manner. Monoubiquitinated, by auto-ubiquitination. Polyubiquitinated in the presence of UBE2D3 (in vitro).

It localises to the nucleus. The protein resides in the cytoplasm. Its subcellular location is the chromosome. It catalyses the reaction S-ubiquitinyl-[E2 ubiquitin-conjugating enzyme]-L-cysteine + [acceptor protein]-L-lysine = [E2 ubiquitin-conjugating enzyme]-L-cysteine + N(6)-ubiquitinyl-[acceptor protein]-L-lysine.. The protein operates within protein modification; protein ubiquitination. Functionally, E3 ubiquitin-protein ligase that mediates monoubiquitination of 'Lys-119' of histone H2A (H2AK119Ub), thereby playing a central role in histone code and gene regulation. H2AK119Ub gives a specific tag for epigenetic transcriptional repression and participates in X chromosome inactivation of female mammals. May be involved in the initiation of both imprinted and random X inactivation. Essential component of a Polycomb group (PcG) multiprotein PRC1-like complex, a complex class required to maintain the transcriptionally repressive state of many genes, including Hox genes, throughout development. PcG PRC1 complex acts via chromatin remodeling and modification of histones, rendering chromatin heritably changed in its expressibility. E3 ubiquitin-protein ligase activity is enhanced by BMI1/PCGF4. Acts as the main E3 ubiquitin ligase on histone H2A of the PRC1 complex, while RING1 may rather act as a modulator of RNF2/RING2 activity. Plays a role in the transcriptional repression of genes that are required for pluripotency in embryonic stem cells, thereby contributing to differentiation of the ectodermal and endodermal germ layers. Association with the chromosomal DNA is cell-cycle dependent. In resting B- and T-lymphocytes, interaction with AURKB leads to block its activity, thereby maintaining transcription in resting lymphocytes. Also acts as a negative regulator of autophagy by mediating ubiquitination of AMBRA1, leading to its subsequent degradation. This is E3 ubiquitin-protein ligase RING2 (RNF2) from Pongo abelii (Sumatran orangutan).